Here is a 69-residue protein sequence, read N- to C-terminus: MVGIIVKDGESIESALKRFKRDCANAGIMSEIKRREYFEKPSIKKKKAIESAKRKAEKKKRLFSKKDKA.

Positions 49 to 69 are disordered; the sequence is IESAKRKAEKKKRLFSKKDKA.

This sequence belongs to the bacterial ribosomal protein bS21 family.

The polypeptide is Small ribosomal subunit protein bS21 (Leptospira borgpetersenii serovar Hardjo-bovis (strain JB197)).